A 456-amino-acid chain; its full sequence is Hydroxymethylglutaryl coenzyme A synthase (456 aa).

Ala-34 is a (3S)-3-hydroxy-3-methylglutaryl-CoA binding site. The Proton donor/acceptor role is filled by Glu-85. Residues Cys-119, Thr-161, Ser-211, His-258, Lys-267, Asn-335, and Ser-369 each coordinate (3S)-3-hydroxy-3-methylglutaryl-CoA. Cys-119 serves as the catalytic Acyl-thioester intermediate. His-258 functions as the Proton donor/acceptor in the catalytic mechanism.

This sequence belongs to the thiolase-like superfamily. HMG-CoA synthase family.

It carries out the reaction acetoacetyl-CoA + acetyl-CoA + H2O = (3S)-3-hydroxy-3-methylglutaryl-CoA + CoA + H(+). In terms of biological role, HMG-CoA synthase; part of the gene cluster that mediates the biosynthesis of 1233A, a natural compound known as an inhibitor of HMG-CoA synthase in the mevalonate pathway and with antibacterial and antifungal activities. This enzyme condenses acetyl-CoA with acetoacetyl-CoA to form HMG-CoA, which is the substrate for HMG-CoA reductase. As part of the 1233A biosynthesis cluster, is involved in conferring self-resistance to 1233A. The polypeptide is Hydroxymethylglutaryl coenzyme A synthase (Fusarium sp).